The chain runs to 197 residues: Putative manganese efflux pump MntP (197 aa).

The next 6 membrane-spanning stretches (helical) occupy residues 8-28 (VILL…GLGA), 43-63 (VYAA…GYLL), 66-86 (VLLG…LIVL), 123-143 (LAIA…LLAL), 146-166 (WLAC…GIYL), and 177-197 (KAEI…MLFS).

This sequence belongs to the MntP (TC 9.B.29) family.

The protein localises to the cell inner membrane. Functionally, probably functions as a manganese efflux pump. This is Putative manganese efflux pump MntP from Psychrobacter arcticus (strain DSM 17307 / VKM B-2377 / 273-4).